The sequence spans 543 residues: CBS domain-containing protein CBSCBSPB1 (543 aa).

The disordered stretch occupies residues 1–35 (MASQGGPRRSLSVTTASLHGKKKSMDMAERGLDTG). At Ser-17 the chain carries Phosphoserine. Basic and acidic residues predominate over residues 23 to 35 (KSMDMAERGLDTG). CBS domains are found at residues 59–118 (RLSK…NVEE), 125–183 (MTKN…RAAE), 225–285 (IIPD…LPPS), and 293–350 (MTQN…AGTT). Residues 372 to 393 (LSPNEDDEDSRSESSMKVASEA) form a disordered region. The region spanning 402–489 (ANTFSFKIED…KSLRLHLDDS (88 aa)) is the PB1 domain. Residues 518–538 (AYSGVAAGAALVAGLGFMAFL) traverse the membrane as a helical segment.

The protein localises to the membrane. The protein is CBS domain-containing protein CBSCBSPB1 (CBSCBSPB1) of Arabidopsis thaliana (Mouse-ear cress).